Consider the following 33-residue polypeptide: Ice-structuring protein GS-5 (33 aa).

Met1 carries the post-translational modification Blocked amino end (Met).

It belongs to the type-I AFP family.

Its function is as follows. Antifreeze proteins lower the blood freezing point. The chain is Ice-structuring protein GS-5 from Myoxocephalus aenaeus (Grubby sculpin).